The chain runs to 790 residues: F-box and leucine-rich repeat protein 13 (790 aa).

Residues 237-283 (AFDISVLPEQAILQIFLYLTFKDMMACSRVNRSWMAMIQRGSLWNSI) enclose the F-box domain. 6 LRR repeats span residues 503-525 (QLTV…HFFD), 531-552 (RLRE…IRLS), 557-579 (NLHY…YIAS), 582-602 (SLIS…TILS), 606-628 (KLRE…AYCK), and 632-657 (LLEH…IFCT).

Belongs to the DRC6 family. As to quaternary structure, component of the nexin-dynein regulatory complex (N-DRC). Directly interacts with SKP1 and CUL1. Interacts with TCTE1/DRC5.

The protein resides in the cytoplasm. Its subcellular location is the cytoskeleton. It is found in the flagellum axoneme. It localises to the microtubule organizing center. The protein localises to the centrosome. Substrate-recognition component of the SCF (SKP1-CUL1-F-box protein)-type E3 ubiquitin ligase complex. Component of the nexin-dynein regulatory complex (N-DRC), a key regulator of ciliary/flagellar motility which maintains the alignment and integrity of the distal axoneme and regulates microtubule sliding in motile axonemes. Specifically targets CEP192 isoform 3 for ubiquitin-mediated proteolysis and thereby acts as a regulator of microtubule nucleation activity. The chain is F-box and leucine-rich repeat protein 13 (Fbxl13) from Mus musculus (Mouse).